The chain runs to 143 residues: Transcription antitermination protein NusB (143 aa).

This sequence belongs to the NusB family.

Functionally, involved in transcription antitermination. Required for transcription of ribosomal RNA (rRNA) genes. Binds specifically to the boxA antiterminator sequence of the ribosomal RNA (rrn) operons. The polypeptide is Transcription antitermination protein NusB (Clostridium botulinum (strain Kyoto / Type A2)).